We begin with the raw amino-acid sequence, 553 residues long: Hydroxylamine reductase (553 aa).

[2Fe-2S] cluster-binding residues include Cys-3, Cys-6, Cys-18, and Cys-25. Hybrid [4Fe-2O-2S] cluster contacts are provided by His-252, Glu-276, Cys-320, Cys-408, Cys-436, Cys-461, Glu-495, and Lys-497. The residue at position 408 (Cys-408) is a Cysteine persulfide.

It belongs to the HCP family. It depends on [2Fe-2S] cluster as a cofactor. Requires hybrid [4Fe-2O-2S] cluster as cofactor.

It is found in the cytoplasm. It catalyses the reaction A + NH4(+) + H2O = hydroxylamine + AH2 + H(+). Catalyzes the reduction of hydroxylamine to form NH(3) and H(2)O. The sequence is that of Hydroxylamine reductase from Aliivibrio fischeri (strain MJ11) (Vibrio fischeri).